A 520-amino-acid chain; its full sequence is 3-phosphoshikimate 1-carboxyvinyltransferase, chloroplastic (520 aa).

A chloroplast-targeting transit peptide spans 1-76; sequence MAQVSRICNG…KVMSSVSTAE (76 aa). Residues 20–39 are disordered; it reads LSKSSQRKSPLSVSLKTQQH. Residues Lys-99, Ser-100, and Arg-104 each contribute to the 3-phosphoshikimate site. Residue Lys-99 coordinates phosphoenolpyruvate. Phosphoenolpyruvate-binding residues include Gly-177 and Arg-207. 3-phosphoshikimate is bound by residues Ser-254, Ser-255, Gln-256, Ser-282, Asp-407, and Lys-434. Gln-256 is a phosphoenolpyruvate binding site. Residue Asp-407 is the Proton acceptor of the active site. Phosphoenolpyruvate is bound by residues Arg-438, Arg-480, and Lys-505.

It belongs to the EPSP synthase family.

It localises to the plastid. It is found in the chloroplast. It catalyses the reaction 3-phosphoshikimate + phosphoenolpyruvate = 5-O-(1-carboxyvinyl)-3-phosphoshikimate + phosphate. It functions in the pathway metabolic intermediate biosynthesis; chorismate biosynthesis; chorismate from D-erythrose 4-phosphate and phosphoenolpyruvate: step 6/7. Functionally, catalyzes the transfer of the enolpyruvyl moiety of phosphoenolpyruvate (PEP) to the 5-hydroxyl of shikimate-3-phosphate (S3P) to produce enolpyruvyl shikimate-3-phosphate and inorganic phosphate. This chain is 3-phosphoshikimate 1-carboxyvinyltransferase, chloroplastic, found in Arabidopsis thaliana (Mouse-ear cress).